A 650-amino-acid polypeptide reads, in one-letter code: Putative secretin GspD (650 aa).

An N-terminal signal peptide occupies residues 1-23 (MKGLNKITCCLLAALLMPCAGHA). An N0 region spans residues 24–122 (ENEQYGANFN…IADSSRPGVG (99 aa)). Residues 124 to 188 (ELVTRIVPLE…EVIKRVDVIG (65 aa)) are N1. The interval 189 to 263 (TEKQQIIHLE…LLKSLDVEES (75 aa)) is N2. Positions 266–342 (GNTRVYYLKY…KLATVIARLD (77 aa)) are N3. Residues 345–596 (RAQVLVEAII…VFIRPTIIRD (252 aa)) form a secretin region. The interval 598–650 (DVYRSLSKEKYTRYRQEQQQRIDGKSKALVGSEDLPVLDENTFNSHAPAPSSR) is s domain.

This sequence belongs to the bacterial secretin family. GSP D subfamily. In terms of assembly, forms a cylindrical channel with 15 subunits; approximately 25% of the particles have 16-subunit channels. Closed pentadeacameric channels are 180 Angstroms long and 145 Angstroms in diameter. Each subunit turns in a clock-wise manner around the channel.

The protein localises to the cell outer membrane. Involved in a type II secretion system (T2SS, formerly general secretion pathway, GSP) for the export of folded proteins across the outer membrane. This subunit would form the outer membrane channel. This chain is Putative secretin GspD (gspD), found in Escherichia coli (strain K12).